Consider the following 438-residue polypeptide: 3-phosphoshikimate 1-carboxyvinyltransferase (438 aa).

3 residues coordinate 3-phosphoshikimate: Lys23, Ser24, and Arg28. A phosphoenolpyruvate-binding site is contributed by Lys23. Phosphoenolpyruvate is bound by residues Gly94 and Arg122. Ser167, Gln169, Asp321, and Lys348 together coordinate 3-phosphoshikimate. A phosphoenolpyruvate-binding site is contributed by Gln169. The active-site Proton acceptor is the Asp321. 2 residues coordinate phosphoenolpyruvate: Arg352 and Arg393.

It belongs to the EPSP synthase family. As to quaternary structure, monomer.

It localises to the cytoplasm. The enzyme catalyses 3-phosphoshikimate + phosphoenolpyruvate = 5-O-(1-carboxyvinyl)-3-phosphoshikimate + phosphate. It participates in metabolic intermediate biosynthesis; chorismate biosynthesis; chorismate from D-erythrose 4-phosphate and phosphoenolpyruvate: step 6/7. In terms of biological role, catalyzes the transfer of the enolpyruvyl moiety of phosphoenolpyruvate (PEP) to the 5-hydroxyl of shikimate-3-phosphate (S3P) to produce enolpyruvyl shikimate-3-phosphate and inorganic phosphate. This chain is 3-phosphoshikimate 1-carboxyvinyltransferase, found in Helicobacter hepaticus (strain ATCC 51449 / 3B1).